Consider the following 245-residue polypeptide: MNVILLIPARYGSSRFPGKPLAPINGKPMIQHVYERASLAKGLTNIYVATDDERIKATVEGFGGKVVMTSPDAASGTDRINEAIKLLGLKDDDLVINVQGDQPLIDPTAIEQLINLFERQPGEFEMATLGYEIVNKADIDDPMQVKMVFDNNYYALYFSRSRIPFGRDTQDYPVFKHLGIYAYTSKFVQTFAALPLGRLEDLEKLEQLRALEHGHKIKIAISASNSLEVDRPEDIHKCEQRLAAS.

This sequence belongs to the KdsB family.

It localises to the cytoplasm. It catalyses the reaction 8-amino-3,8-dideoxy-alpha-D-manno-octulosonate + CTP = CMP-8-amino-3,8-dideoxy-alpha-D-manno-oct-2-ulosonate + diphosphate. The protein operates within bacterial outer membrane biogenesis; lipopolysaccharide biosynthesis. Activates KDO8N (a required 8-carbon sugar) for incorporation into bacterial lipopolysaccharide in the Shewanella genus. The polypeptide is 8-amino-3,8-dideoxy-manno-octulosonate cytidylyltransferase (Shewanella putrefaciens (strain CN-32 / ATCC BAA-453)).